Reading from the N-terminus, the 249-residue chain is Probable transcriptional regulatory protein LBJ_0543 (249 aa).

It belongs to the TACO1 family.

The protein localises to the cytoplasm. In Leptospira borgpetersenii serovar Hardjo-bovis (strain JB197), this protein is Probable transcriptional regulatory protein LBJ_0543.